Reading from the N-terminus, the 360-residue chain is Peptide chain release factor 1 (360 aa).

Glutamine 235 carries the post-translational modification N5-methylglutamine. The interval 284-312 (AKRQQAEASTRRNLLGSGDRSDRNRTYNF) is disordered.

This sequence belongs to the prokaryotic/mitochondrial release factor family. In terms of processing, methylated by PrmC. Methylation increases the termination efficiency of RF1.

Its subcellular location is the cytoplasm. In terms of biological role, peptide chain release factor 1 directs the termination of translation in response to the peptide chain termination codons UAG and UAA. The chain is Peptide chain release factor 1 from Escherichia coli O81 (strain ED1a).